The primary structure comprises 235 residues: Large ribosomal subunit protein uL1 (235 aa).

This sequence belongs to the universal ribosomal protein uL1 family. As to quaternary structure, part of the 50S ribosomal subunit.

Its function is as follows. Binds directly to 23S rRNA. The L1 stalk is quite mobile in the ribosome, and is involved in E site tRNA release. In terms of biological role, protein L1 is also a translational repressor protein, it controls the translation of the L11 operon by binding to its mRNA. The protein is Large ribosomal subunit protein uL1 of Blochmanniella floridana.